Here is a 504-residue protein sequence, read N- to C-terminus: Glutamate--tRNA ligase (504 aa).

The 'HIGH' region motif lies at 25–35; it reads PSPTGNPHVGL. The Zn(2+) site is built by cysteine 122, cysteine 124, cysteine 149, and glutamate 151. The short motif at 270-274 is the 'KMSKS' region element; it reads KLSKR. Lysine 273 contacts ATP.

Belongs to the class-I aminoacyl-tRNA synthetase family. Glutamate--tRNA ligase type 1 subfamily. As to quaternary structure, monomer. The cofactor is Zn(2+).

Its subcellular location is the cytoplasm. It carries out the reaction tRNA(Glu) + L-glutamate + ATP = L-glutamyl-tRNA(Glu) + AMP + diphosphate. Its function is as follows. Catalyzes the attachment of glutamate to tRNA(Glu) in a two-step reaction: glutamate is first activated by ATP to form Glu-AMP and then transferred to the acceptor end of tRNA(Glu). This is Glutamate--tRNA ligase from Streptomyces avermitilis (strain ATCC 31267 / DSM 46492 / JCM 5070 / NBRC 14893 / NCIMB 12804 / NRRL 8165 / MA-4680).